The primary structure comprises 512 residues: Glycerol kinase (512 aa).

Thr13 is an ADP binding site. ATP-binding residues include Thr13, Thr14, and Ser15. Position 13 (Thr13) interacts with sn-glycerol 3-phosphate. Arg17 is a binding site for ADP. Positions 83, 84, 135, and 252 each coordinate sn-glycerol 3-phosphate. Glycerol contacts are provided by Arg83, Glu84, Tyr135, Asp252, and Gln253. Thr274 and Gly318 together coordinate ADP. The ATP site is built by Thr274, Gly318, Gln322, and Gly419. ADP-binding residues include Gly419 and Asn423.

It belongs to the FGGY kinase family.

It catalyses the reaction glycerol + ATP = sn-glycerol 3-phosphate + ADP + H(+). It participates in polyol metabolism; glycerol degradation via glycerol kinase pathway; sn-glycerol 3-phosphate from glycerol: step 1/1. With respect to regulation, inhibited by fructose 1,6-bisphosphate (FBP). Its function is as follows. Key enzyme in the regulation of glycerol uptake and metabolism. Catalyzes the phosphorylation of glycerol to yield sn-glycerol 3-phosphate. This Corynebacterium kroppenstedtii (strain DSM 44385 / JCM 11950 / CIP 105744 / CCUG 35717) protein is Glycerol kinase.